The following is a 155-amino-acid chain: Ribosome maturation factor RimP (155 aa).

This sequence belongs to the RimP family.

The protein localises to the cytoplasm. Functionally, required for maturation of 30S ribosomal subunits. The polypeptide is Ribosome maturation factor RimP (Synechococcus sp. (strain WH7803)).